A 102-amino-acid chain; its full sequence is Small ribosomal subunit protein uS10 (102 aa).

It belongs to the universal ribosomal protein uS10 family. In terms of assembly, part of the 30S ribosomal subunit.

In terms of biological role, involved in the binding of tRNA to the ribosomes. The sequence is that of Small ribosomal subunit protein uS10 from Pseudothermotoga lettingae (strain ATCC BAA-301 / DSM 14385 / NBRC 107922 / TMO) (Thermotoga lettingae).